The sequence spans 309 residues: Heme-dependent oxidative N-demethylase beta subunit (309 aa).

Residues 2-103 (STLLDVRVAA…SPPANLFPLH (102 aa)) form the FAD-binding FR-type domain. The 84-residue stretch at 226-309 (FRVELARSGQ…GCGSPILLDL (84 aa)) folds into the 2Fe-2S ferredoxin-type domain. Residues C260, C265, C268, and C296 each contribute to the [2Fe-2S] cluster site.

This sequence belongs to the PDR/VanB family. In terms of assembly, the heme-dependent oxidative N-demethylase (HODM) is a heterotetramer composed of a catalytic alpha subunit, a FMN/2Fe-2S-dependent oxidoreductase beta subunit, a gamma subunit with putative aminotransferase activity, and a delta subunit of unknown function. Requires [2Fe-2S] cluster as cofactor. FMN serves as cofactor.

Component of the heme-dependent oxidative N-demethylase (HODM) enzyme, that catalyzes the NADPH-dependent oxidation of dimethylamine (DMA) to methylamine (MA) and formaldehyde. Functions in bacterial methylated amine catabolism, linking alkylamine oxidation to the tetrahydrofolate C1 pool. The beta subunit of HODM binds FMN and a 2Fe-2S cluster, and likely reduces the ferric heme iron of the alpha subunit to ferrous using NADPH. The protein is Heme-dependent oxidative N-demethylase beta subunit of Ectopseudomonas mendocina (strain ymp) (Pseudomonas mendocina).